The chain runs to 327 residues: Porphobilinogen deaminase (327 aa).

Cys251 carries the post-translational modification S-(dipyrrolylmethanemethyl)cysteine.

Belongs to the HMBS family. Requires dipyrromethane as cofactor.

The catalysed reaction is 4 porphobilinogen + H2O = hydroxymethylbilane + 4 NH4(+). The protein operates within porphyrin-containing compound metabolism; protoporphyrin-IX biosynthesis; coproporphyrinogen-III from 5-aminolevulinate: step 2/4. Its function is as follows. Catalyzes the tetrapolymerization of the monopyrrole porphobilinogen (PBG) into the hydroxymethylbilane pre-uroporphyrinogen in several discrete steps. The protein is Porphobilinogen deaminase (HEM3) of Saccharomyces cerevisiae (strain ATCC 204508 / S288c) (Baker's yeast).